Consider the following 435-residue polypeptide: Glutamyl-tRNA reductase (435 aa).

Residues T49–R52, S109, E114–Q116, and Q120 each bind substrate. C50 (nucleophile) is an active-site residue. An NADP(+)-binding site is contributed by G189–S194.

Belongs to the glutamyl-tRNA reductase family. As to quaternary structure, homodimer.

It catalyses the reaction (S)-4-amino-5-oxopentanoate + tRNA(Glu) + NADP(+) = L-glutamyl-tRNA(Glu) + NADPH + H(+). The protein operates within porphyrin-containing compound metabolism; protoporphyrin-IX biosynthesis; 5-aminolevulinate from L-glutamyl-tRNA(Glu): step 1/2. Functionally, catalyzes the NADPH-dependent reduction of glutamyl-tRNA(Glu) to glutamate 1-semialdehyde (GSA). The sequence is that of Glutamyl-tRNA reductase from Listeria monocytogenes serotype 4a (strain HCC23).